Reading from the N-terminus, the 435-residue chain is E3 ubiquitin-protein ligase RNFT1 (435 aa).

The interval 1–62 (MPLFLLSLPT…SSEDASTPQC (62 aa)) is disordered. A compositionally biased stretch (basic and acidic residues) spans 16–34 (GHERRQRPEAKTSGSEKKY). Residues 40 to 62 (ANRSQLHSPPGTGSSEDASTPQC) show a composition bias toward polar residues. The next 6 helical transmembrane spans lie at 158 to 178 (ILILSVKLVMQHITGISLGIG), 203 to 223 (IQCAWLLVFLAGSSVLLYYTF), 233 to 253 (IFLNPTLDHLSFWEVFWIVGI), 256 to 276 (FILKFFFMGLKCLILLVPSFI), 298 to 318 (TFVPIPVWFRYLISYGEFGNV), and 323 to 343 (LGILLALLYLILKLLEFFGHL). The tract at residues 368–419 (CSDVDDICSICQAEFQKPILLICQHIFCEECMTLWFNREKTCPLCRTVISDH) is required for ubiquitin ligase activity and for protection against ER stress-induced cell death. The RING-type zinc finger occupies 375–413 (CSICQAEFQKPILLICQHIFCEECMTLWFNREKTCPLCR).

In terms of tissue distribution, expressed at highest levels in testis, lower levels in heart, liver, lung, and kidney. Not detected in brain, ovary, and uterus. Down-regulated in testis from patients with maturation arrest (MA) or Sertoli cell-only syndrome (SCOS). Ubiquitously expressed with high expression in testis.

The protein resides in the endoplasmic reticulum membrane. The enzyme catalyses S-ubiquitinyl-[E2 ubiquitin-conjugating enzyme]-L-cysteine + [acceptor protein]-L-lysine = [E2 ubiquitin-conjugating enzyme]-L-cysteine + N(6)-ubiquitinyl-[acceptor protein]-L-lysine.. It functions in the pathway protein modification; protein ubiquitination. Its function is as follows. E3 ubiquitin-protein ligase that acts in the endoplasmic reticulum (ER)-associated degradation (ERAD) pathway, which targets misfolded proteins that accumulate in the endoplasmic reticulum (ER) for ubiquitination and subsequent proteasome-mediated degradation. Protects cells from ER stress-induced apoptosis. This is E3 ubiquitin-protein ligase RNFT1 (RNFT1) from Homo sapiens (Human).